Reading from the N-terminus, the 993-residue chain is Ephrin type-B receptor 3 (993 aa).

The first 29 residues, 1–29 (MAGARPPPGLLPLLAPLLLPLLLPAGCWA), serve as a signal peptide directing secretion. Residues 30–554 (LEETLMDTKW…AQQLQEQLPL (525 aa)) lie on the Extracellular side of the membrane. Residues 31–209 (EETLMDTKWV…FYKKCASTTA (179 aa)) form the Eph LBD domain. Residues Cys73 and Cys191 are joined by a disulfide bond. 2 consecutive Fibronectin type-III domains span residues 331-446 (VPSP…TNQA) and 447-540 (APSE…TTSE). Asn343 and Asn440 each carry an N-linked (GlcNAc...) asparagine glycan. The helical transmembrane segment at 555–575 (IVGSTVAGFVFMVVVVVIALV) threads the bilayer. Residues 576–993 (CLRKQRHGPD…QMNQTLPVQV (418 aa)) are Cytoplasmic-facing. At Tyr609 the chain carries Phosphotyrosine; by autocatalysis. The Protein kinase domain maps to 628-891 (VKIEEVIGAG…QIVNTLDKLI (264 aa)). Residues 634-642 (IGAGEFGEV) and Lys660 contribute to the ATP site. The Proton acceptor role is filled by Asp753. One can recognise an SAM domain in the interval 920–984 (TTFTTVGDWL…LCSIQDMRLQ (65 aa)). Residues 991-993 (VQV) carry the PDZ-binding motif.

This sequence belongs to the protein kinase superfamily. Tyr protein kinase family. Ephrin receptor subfamily. Heterotetramer upon binding of the ligand. The heterotetramer is composed of an ephrin dimer and a receptor dimer. Oligomerization is probably required to induce biological responses. Post-translationally, phosphorylated. Autophosphorylates upon ligand-binding. Autophosphorylation on Tyr-609 is required for interaction with SH2 domain-containing proteins. Ubiquitinated by RNF186, mainly through 'Lys-48' and 'Lys-63'-linked polyubiquitin chains. Expressed in cells of the retinal ganglion cell layer during retinal axon guidance to the optic disk. Expressed by Paneth and progenitor cells in the crypts of the intestinal epithelium (at protein level). Expressed in myogenic progenitor cells.

Its subcellular location is the cell membrane. The protein resides in the cell projection. It is found in the dendrite. It catalyses the reaction L-tyrosyl-[protein] + ATP = O-phospho-L-tyrosyl-[protein] + ADP + H(+). Receptor tyrosine kinase which binds promiscuously transmembrane ephrin-B family ligands residing on adjacent cells, leading to contact-dependent bidirectional signaling into neighboring cells. The signaling pathway downstream of the receptor is referred to as forward signaling while the signaling pathway downstream of the ephrin ligand is referred to as reverse signaling. Generally has an overlapping and redundant function with EPHB2. Like EPHB2, functions in axon guidance during development regulating for instance the neurons forming the corpus callosum and the anterior commissure, 2 major interhemispheric connections between the temporal lobes of the cerebral cortex. In addition to its role in axon guidance also plays an important redundant role with other ephrin-B receptors in development and maturation of dendritic spines and the formation of excitatory synapses. Controls other aspects of development through regulation of cell migration and positioning. This includes angiogenesis, palate development and thymic epithelium development for instance. Forward and reverse signaling through the EFNB2/EPHB3 complex also regulate migration and adhesion of cells that tubularize the urethra and septate the cloaca. Finally, plays an important role in intestinal epithelium differentiation segregating progenitor from differentiated cells in the crypt. In Mus musculus (Mouse), this protein is Ephrin type-B receptor 3 (Ephb3).